The following is a 106-amino-acid chain: Large ribosomal subunit protein uL24 (106 aa).

This sequence belongs to the universal ribosomal protein uL24 family. As to quaternary structure, part of the 50S ribosomal subunit.

In terms of biological role, one of two assembly initiator proteins, it binds directly to the 5'-end of the 23S rRNA, where it nucleates assembly of the 50S subunit. Its function is as follows. One of the proteins that surrounds the polypeptide exit tunnel on the outside of the subunit. The protein is Large ribosomal subunit protein uL24 of Clostridium tetani (strain Massachusetts / E88).